Consider the following 145-residue polypeptide: Holo-[acyl-carrier-protein] synthase (145 aa).

The Mg(2+) site is built by D9 and E63.

The protein belongs to the P-Pant transferase superfamily. AcpS family. Mg(2+) serves as cofactor.

Its subcellular location is the cytoplasm. The catalysed reaction is apo-[ACP] + CoA = holo-[ACP] + adenosine 3',5'-bisphosphate + H(+). Transfers the 4'-phosphopantetheine moiety from coenzyme A to a Ser of acyl-carrier-protein. In Burkholderia vietnamiensis (strain G4 / LMG 22486) (Burkholderia cepacia (strain R1808)), this protein is Holo-[acyl-carrier-protein] synthase.